The following is a 236-amino-acid chain: Mammalian ependymin-related protein 1 (236 aa).

The first 35 residues, 1 to 35, serve as a signal peptide directing secretion; that stretch reads MPRRAPLRVARGSLDAWLLGGLWVCALGCLCGVGM. 3 disulfide bridges follow: Cys54-Cys184, Cys100-Cys234, and Cys125-Cys222. Residues Asn142 and Asn194 are each glycosylated (N-linked (GlcNAc...) asparagine).

It belongs to the ependymin family. In terms of assembly, homodimer. Post-translationally, N-glycosylated; the glycan contains mannose-6-phosphate moieties.

It localises to the lysosome lumen. The protein resides in the secreted. Its function is as follows. Binds anionic lipids and gangliosides at acidic pH. This chain is Mammalian ependymin-related protein 1 (EPDR1), found in Bos taurus (Bovine).